We begin with the raw amino-acid sequence, 196 residues long: Transcription repressor OFP10 (196 aa).

The 60-residue stretch at 100-159 folds into the OVATE domain; it reads MAKESINPFEDYKKSMNQMIEERYIETESELKELLRCFLDINPSPQHNLIVRAFVDVCSH.

Expressed in roots, cauline leaves, shoots, stems, flower buds and siliques.

It is found in the nucleus. In terms of biological role, transcriptional repressor that may regulate multiple aspects of plant growth and development through the regulation of BEL1-LIKE (BLH) and KNOX TALE (KNAT) homeodomain transcription factors. The protein is Transcription repressor OFP10 (OFP10) of Arabidopsis thaliana (Mouse-ear cress).